We begin with the raw amino-acid sequence, 397 residues long: Small ribosomal subunit protein mS29 (397 aa).

A mitochondrion-targeting transit peptide spans 1–17 (MLKGMTRLVSRVHKLDP). An N6-acetyllysine mark is found at lysine 174 and lysine 206.

This sequence belongs to the mitochondrion-specific ribosomal protein mS29 family. In terms of assembly, component of the mitochondrial ribosome small subunit (28S) which comprises a 12S rRNA and about 30 distinct proteins. Interacts with DELE1. Interacts with NOA1.

It localises to the mitochondrion. The catalysed reaction is GTP + H2O = GDP + phosphate + H(+). Functionally, as a component of the mitochondrial small ribosomal subunit, it plays a role in the translation of mitochondrial mRNAs. Involved in mediating interferon-gamma-induced cell death. Displays GTPase activity in vitro. The polypeptide is Small ribosomal subunit protein mS29 (Bos taurus (Bovine)).